Here is a 214-residue protein sequence, read N- to C-terminus: Uridine kinase (214 aa).

11–18 (GGSGSGKT) provides a ligand contact to ATP.

Belongs to the uridine kinase family.

It localises to the cytoplasm. It carries out the reaction uridine + ATP = UMP + ADP + H(+). It catalyses the reaction cytidine + ATP = CMP + ADP + H(+). It participates in pyrimidine metabolism; CTP biosynthesis via salvage pathway; CTP from cytidine: step 1/3. It functions in the pathway pyrimidine metabolism; UMP biosynthesis via salvage pathway; UMP from uridine: step 1/1. This Brevibacillus brevis (strain 47 / JCM 6285 / NBRC 100599) protein is Uridine kinase.